We begin with the raw amino-acid sequence, 605 residues long: Protein Spindly (605 aa).

Met1 carries the N-acetylmethionine modification. Positions 3–442 (TDIVINLRCK…ELKLKYEPEE (440 aa)) form a coiled coil. A phosphoserine mark is found at Ser513, Ser515, and Ser555. Residues 545 to 581 (LSERSGNTLNSPRLAAESKLQTEVKEGKETASKLEKE) form a disordered region. A compositionally biased stretch (basic and acidic residues) spans 564–581 (LQTEVKEGKETASKLEKE).

Belongs to the Spindly family. In terms of assembly, interacts with KNTC1 and ZW10. These interactions appear weak and may be transient or indirect. Interacts with dynein intermediate chain and dynactin (DCTN1). Interacts with the catalytically active form of USP45. Post-translationally, monoubiquitinated with'Lys-48' linkage. Deubiquitinated by USP45.

The protein localises to the cytoplasm. It localises to the cytoskeleton. The protein resides in the microtubule organizing center. Its subcellular location is the centrosome. It is found in the chromosome. The protein localises to the centromere. It localises to the kinetochore. The protein resides in the nucleus. Its subcellular location is the spindle pole. In terms of biological role, required for the localization of dynein and dynactin to the mitotic kintochore. Dynein is believed to control the initial lateral interaction between the kinetochore and spindle microtubules and to facilitate the subsequent formation of end-on kinetochore-microtubule attachments mediated by the NDC80 complex. Also required for correct spindle orientation. Does not appear to be required for the removal of spindle assembly checkpoint (SAC) proteins from the kinetochore upon bipolar spindle attachment. Acts as an adapter protein linking the dynein motor complex to various cargos and converts dynein from a non-processive to a highly processive motor in the presence of dynactin. Facilitates the interaction between dynein and dynactin and activates dynein processivity (the ability to move along a microtubule for a long distance without falling off the track). Plays a role in cell migration. This is Protein Spindly from Macaca fascicularis (Crab-eating macaque).